Reading from the N-terminus, the 614-residue chain is Serine/threonine-protein kinase-like protein E (614 aa).

The Protein kinase domain maps to Tyr-15–Ser-404. Residue Leu-21–Gln-29 coordinates ATP. Residues Pro-256 to Gly-269 are compositionally biased toward polar residues. Positions Pro-256–Ser-284 are disordered.

This sequence belongs to the protein kinase superfamily. Ser/Thr protein kinase family.

Functionally, lacks protein kinase activity. The protein is Serine/threonine-protein kinase-like protein E (spkE) of Synechocystis sp. (strain ATCC 27184 / PCC 6803 / Kazusa).